A 207-amino-acid chain; its full sequence is MNQTTIIGIAGGSGSGKTTVTNAIMKNLEGHSVALLAQDYYYKDQSHLTFEERLETNYDHPFAFDNDLLIHNLKDLRNGKPVEVPTYDYSQHTRSKETIAFDPKDVIIVEGIFALENNTLRDMMDVKIYVDTDADLRILRRLTRDTKERGRTMESVINQYLNVVRPMHEQFIEPTKKHADIIIPEGGSNKVAIDIMTTKIQSLVSKK.

11-18 (GGSGSGKT) is a binding site for ATP.

It belongs to the uridine kinase family.

The protein localises to the cytoplasm. The enzyme catalyses uridine + ATP = UMP + ADP + H(+). It carries out the reaction cytidine + ATP = CMP + ADP + H(+). It participates in pyrimidine metabolism; CTP biosynthesis via salvage pathway; CTP from cytidine: step 1/3. It functions in the pathway pyrimidine metabolism; UMP biosynthesis via salvage pathway; UMP from uridine: step 1/1. The protein is Uridine kinase of Staphylococcus epidermidis (strain ATCC 35984 / DSM 28319 / BCRC 17069 / CCUG 31568 / BM 3577 / RP62A).